Reading from the N-terminus, the 210-residue chain is Probable nicotinate-nucleotide adenylyltransferase (210 aa).

It belongs to the NadD family.

It carries out the reaction nicotinate beta-D-ribonucleotide + ATP + H(+) = deamido-NAD(+) + diphosphate. The protein operates within cofactor biosynthesis; NAD(+) biosynthesis; deamido-NAD(+) from nicotinate D-ribonucleotide: step 1/1. Catalyzes the reversible adenylation of nicotinate mononucleotide (NaMN) to nicotinic acid adenine dinucleotide (NaAD). This Methylococcus capsulatus (strain ATCC 33009 / NCIMB 11132 / Bath) protein is Probable nicotinate-nucleotide adenylyltransferase.